Reading from the N-terminus, the 151-residue chain is Ribosomal RNA large subunit methyltransferase H (151 aa).

S-adenosyl-L-methionine-binding positions include L73, G100, and 119-124 (LTKLTL).

Belongs to the RNA methyltransferase RlmH family. In terms of assembly, homodimer.

It localises to the cytoplasm. The catalysed reaction is pseudouridine(1915) in 23S rRNA + S-adenosyl-L-methionine = N(3)-methylpseudouridine(1915) in 23S rRNA + S-adenosyl-L-homocysteine + H(+). Its function is as follows. Specifically methylates the pseudouridine at position 1915 (m3Psi1915) in 23S rRNA. The sequence is that of Ribosomal RNA large subunit methyltransferase H from Campylobacter hominis (strain ATCC BAA-381 / DSM 21671 / CCUG 45161 / LMG 19568 / NCTC 13146 / CH001A).